The primary structure comprises 137 residues: Large ribosomal subunit protein uL16 (137 aa).

It belongs to the universal ribosomal protein uL16 family. In terms of assembly, part of the 50S ribosomal subunit.

Its function is as follows. Binds 23S rRNA and is also seen to make contacts with the A and possibly P site tRNAs. This Tolumonas auensis (strain DSM 9187 / NBRC 110442 / TA 4) protein is Large ribosomal subunit protein uL16.